The following is a 351-amino-acid chain: Homeobox protein rough sheath 1 (351 aa).

3 disordered regions span residues 1–23, 57–82, and 187–229; these read MDQS…NSKA, AAAP…GAEM, and GGGS…PRAE. Positions 57-68 are enriched in low complexity; it reads AAAPSSSQQHQQ. Basic and acidic residues predominate over residues 214-229; the sequence is PNGRENDPPEIDPRAE. Positions 232–252 constitute an ELK domain; it reads ELKYQLLKKYSGYLSSLRQEF. Residues 253-316 constitute a DNA-binding region (homeobox; TALE-type); it reads SKKKKKGKLP…NQRKRHWKPS (64 aa).

This sequence belongs to the TALE/KNOX homeobox family.

It localises to the nucleus. Its function is as follows. Plays a possible role in patterning the placement of lateral organs along the axis of the shoot. Mutations in RS1 alters cell fate and causes unregulated cell division and expansion in the leaf. Probably binds to the DNA sequence 5'-TGAC-3'. This chain is Homeobox protein rough sheath 1 (RS1), found in Zea mays (Maize).